The chain runs to 568 residues: 3-(3-hydroxy-phenyl)propionate/3-hydroxycinnamic acid hydroxylase (568 aa).

FAD-binding positions include 13-42 (DVVIVGAGPVGLTLANILGLQGVRTMIVEE) and 278-288 (FRKGRMFLAGD).

This sequence belongs to the PheA/TfdB FAD monooxygenase family. Requires FAD as cofactor.

It carries out the reaction 3-(3-hydroxyphenyl)propanoate + NADH + O2 + H(+) = 3-(2,3-dihydroxyphenyl)propanoate + NAD(+) + H2O. The enzyme catalyses (2E)-3-(3-hydroxyphenyl)prop-2-enoate + NADH + O2 + H(+) = (2E)-3-(2,3-dihydroxyphenyl)prop-2-enoate + NAD(+) + H2O. It participates in aromatic compound metabolism; 3-phenylpropanoate degradation. Functionally, catalyzes the insertion of one atom of molecular oxygen into position 2 of the phenyl ring of 3-(3-hydroxyphenyl)propionate (3-HPP) and hydroxycinnamic acid (3HCI). This Mycobacterium sp. (strain JLS) protein is 3-(3-hydroxy-phenyl)propionate/3-hydroxycinnamic acid hydroxylase.